The chain runs to 269 residues: Shikimate dehydrogenase (NADP(+)) (269 aa).

Shikimate is bound by residues 17–19 (SKS) and threonine 64. Residue lysine 68 is the Proton acceptor of the active site. Glutamate 80 provides a ligand contact to NADP(+). Residues asparagine 89 and aspartate 105 each contribute to the shikimate site. NADP(+) contacts are provided by residues 130 to 134 (GAGGA), 154 to 159 (NRTHTK), and methionine 213. Tyrosine 215 is a shikimate binding site. NADP(+) is bound at residue glycine 237.

It belongs to the shikimate dehydrogenase family. As to quaternary structure, homodimer.

The catalysed reaction is shikimate + NADP(+) = 3-dehydroshikimate + NADPH + H(+). Its pathway is metabolic intermediate biosynthesis; chorismate biosynthesis; chorismate from D-erythrose 4-phosphate and phosphoenolpyruvate: step 4/7. Functionally, involved in the biosynthesis of the chorismate, which leads to the biosynthesis of aromatic amino acids. Catalyzes the reversible NADPH linked reduction of 3-dehydroshikimate (DHSA) to yield shikimate (SA). The polypeptide is Shikimate dehydrogenase (NADP(+)) (Neisseria mucosa).